The primary structure comprises 224 residues: Ribonuclease T (224 aa).

In terms of domain architecture, Exonuclease spans 20–194; sequence VVIDVETAGF…YDTERTAELF (175 aa). Mg(2+) contacts are provided by aspartate 23, glutamate 25, histidine 181, and aspartate 186. The active-site Proton donor/acceptor is histidine 181.

It belongs to the RNase T family. Homodimer. Requires Mg(2+) as cofactor.

Functionally, trims short 3' overhangs of a variety of RNA species, leaving a one or two nucleotide 3' overhang. Responsible for the end-turnover of tRNA: specifically removes the terminal AMP residue from uncharged tRNA (tRNA-C-C-A). Also appears to be involved in tRNA biosynthesis. The sequence is that of Ribonuclease T from Shewanella putrefaciens (strain CN-32 / ATCC BAA-453).